We begin with the raw amino-acid sequence, 96 residues long: (4S)-4-hydroxy-5-phosphonooxypentane-2,3-dione isomerase (96 aa).

In terms of domain architecture, ABM spans 2-91 (HVTLVEINVK…MTGPRKKTVF (90 aa)).

The protein belongs to the LsrG family. Homodimer.

The protein resides in the cytoplasm. The enzyme catalyses (2S)-2-hydroxy-3,4-dioxopentyl phosphate = 3-hydroxy-2,4-dioxopentyl phosphate. Its function is as follows. Involved in the degradation of phospho-AI-2, thereby terminating induction of the lsr operon and closing the AI-2 signaling cycle. Catalyzes the conversion of (4S)-4-hydroxy-5-phosphonooxypentane-2,3-dione (P-DPD) to 3-hydroxy-5-phosphonooxypentane-2,4-dione (P-HPD). This is (4S)-4-hydroxy-5-phosphonooxypentane-2,3-dione isomerase from Yersinia pseudotuberculosis serotype O:1b (strain IP 31758).